The sequence spans 155 residues: Nascent polypeptide-associated complex subunit beta (155 aa).

Disordered stretches follow at residues Met1–Lys39 and Gln122–Glu155. Over residues Thr21–Lys31 the composition is skewed to basic residues. The region spanning Gly34–Val99 is the NAC-A/B domain. Over residues Gln125 to Gly135 the composition is skewed to basic and acidic residues.

This sequence belongs to the NAC-beta family. As to quaternary structure, part of the nascent polypeptide-associated complex (NAC), consisting of EGD2 and EGD1. NAC associates with ribosomes via EGD1.

The protein localises to the cytoplasm. The protein resides in the nucleus. In terms of biological role, component of the nascent polypeptide-associated complex (NAC), a dynamic component of the ribosomal exit tunnel, protecting the emerging polypeptides from interaction with other cytoplasmic proteins to ensure appropriate nascent protein targeting. The NAC complex also promotes mitochondrial protein import by enhancing productive ribosome interactions with the outer mitochondrial membrane and blocks the inappropriate interaction of ribosomes translating non-secretory nascent polypeptides with translocation sites in the membrane of the endoplasmic reticulum. EGD1 may act as a transcription factor that exert a negative effect on the expression of several genes that are transcribed by RNA polymerase II. This is Nascent polypeptide-associated complex subunit beta (EGD1) from Coccidioides immitis (strain RS) (Valley fever fungus).